A 1549-amino-acid chain; its full sequence is ATP-binding cassette sub-family C member 9 (1549 aa).

Topologically, residues 1 to 30 (MSLSFCGNNISSYNINDGVLQNSCFVDALN) are extracellular. The N-linked (GlcNAc...) asparagine glycan is linked to Asn9. The helical transmembrane segment at 31–51 (LVPHVFLLFITFPILFIGWGS) threads the bilayer. Over 52–72 (QSSKVQIHHNTWLHFPGHNLR) the chain is Cytoplasmic. The helical transmembrane segment at 73 to 93 (WILTFALLFVHVCEIAEGIVS) threads the bilayer. Residues 94–101 (DSRRESRH) lie on the Extracellular side of the membrane. Residues 102-122 (LHLFMPAVMGFVATTTSIVYY) form a helical membrane-spanning segment. Residues 123–132 (HNIETSNFPK) are Cytoplasmic-facing. A helical transmembrane segment spans residues 133-153 (LLLALFLYWVMAFITKTIKLV). Topologically, residues 154 to 167 (KYCQSGLDISNLRF) are extracellular. The chain crosses the membrane as a helical span at residues 168-188 (CITGMMVILNGLLMAVEINVI). Residues 189–301 (RVRRYVFFMN…AFGRPILLSS (113 aa)) are Cytoplasmic-facing. The region spanning 297-597 (ILLSSTFRYL…LSTVVRFAVK (301 aa)) is the ABC transmembrane type-1 1 domain. Residues 302–322 (TFRYLADLLGFAGPLCISGIV) form a helical membrane-spanning segment. The Extracellular segment spans residues 323 to 350 (QRVNETQNGTNNTTGISETLSSKEFLEN). 4 N-linked (GlcNAc...) asparagine glycosylation sites follow: Asn326, Asn330, Asn333, and Asn334. A helical transmembrane segment spans residues 351–371 (AYVLAVLLFLALILQRTFLQA). Residues 372–423 (SYYVTIETGINLRGALLAMIYNKILRLSTSNLSMGEMTLGQINNLVAIETNQ) lie on the Cytoplasmic side of the membrane. Residues 424 to 444 (LMWFLFLCPNLWAMPVQIIMG) form a helical membrane-spanning segment. The Extracellular portion of the chain corresponds to 445–455 (VILLYNLLGSS). Residues 456–476 (ALVGAAVIVLLAPIQYFIATK) traverse the membrane as a helical segment. The Cytoplasmic portion of the chain corresponds to 477–531 (LAEAQKSTLDYSTERLKKTNEILKGIKLLKLYAWEHIFCKSVEETRMKELSSLKT). The helical transmembrane segment at 532-552 (FALYTSLSIFMNAAIPIAAVL) threads the bilayer. The Extracellular portion of the chain corresponds to 553–571 (ATFVTHAYASGNNLKPAEA). A helical transmembrane segment spans residues 572 to 592 (FASLSLFHILVTPLFLLSTVV). At 593 to 990 (RFAVKAIISV…TCWRYLTSGG (398 aa)) the chain is on the cytoplasmic side. An ABC transporter 1 domain is found at 672 to 912 (IKVTNGYFSW…DVELYEHWKT (241 aa)). 705 to 712 (GQVGCGKS) is a binding site for ATP. The interval 944 to 967 (REAKAQMEDEDEEEEEEEDEDDNM) is disordered. The span at 951-966 (EDEDEEEEEEEDEDDN) shows a compositional bias: acidic residues. Residues 991 to 1011 (FFLLILMIFSKLLKHSVIVAI) traverse the membrane as a helical segment. In terms of domain architecture, ABC transmembrane type-1 2 spans 994 to 1274 (LILMIFSKLL…VVRNLADLEV (281 aa)). Residues 1012 to 1034 (DYWLATWTSEYSINNTGKADQTY) lie on the Extracellular side of the membrane. A helical membrane pass occupies residues 1035-1055 (YVAGFSILCGAGIFLCLVTSL). Residues 1056-1127 (TVEWMGLTAA…TLLCLSAIGM (72 aa)) lie on the Cytoplasmic side of the membrane. The chain crosses the membrane as a helical span at residues 1128 to 1148 (ISYATPVFLVALLPLGVAFYF). The Extracellular portion of the chain corresponds to 1149–1245 (IQKYFRVASK…IASISGSSNS (97 aa)). A helical transmembrane segment spans residues 1246 to 1266 (GLVGLGLLYALTITNYLNWVV). At 1267–1549 (RNLADLEVQM…LFSTLVMTNK (283 aa)) the chain is on the cytoplasmic side. In terms of domain architecture, ABC transporter 2 spans 1312-1546 (IKIHDLCVRY…KNGLFSTLVM (235 aa)). 1346–1353 (GRTGSGKS) contacts ATP.

The protein belongs to the ABC transporter superfamily. ABCC family. Conjugate transporter (TC 3.A.1.208) subfamily. As to quaternary structure, interacts with KCNJ11. Interacts with KCNJ8.

Its subcellular location is the membrane. Functionally, subunit of ATP-sensitive potassium channels (KATP). Can form cardiac and smooth muscle-type KATP channels with KCNJ11. KCNJ11 forms the channel pore while ABCC9 is required for activation and regulation. Can form a sulfonylurea-sensitive but ATP-insensitive potassium channel with KCNJ8. This is ATP-binding cassette sub-family C member 9 (ABCC9) from Homo sapiens (Human).